Here is a 79-residue protein sequence, read N- to C-terminus: UPF0349 protein BCE33L4669 (79 aa).

This sequence belongs to the UPF0349 family.

This chain is UPF0349 protein BCE33L4669, found in Bacillus cereus (strain ZK / E33L).